The following is a 338-amino-acid chain: Formamidase (338 aa).

The CN hydrolase domain maps to 14 to 257 (VGIGLVQLQL…NEIITAEVRP (244 aa)). Glu-60 (proton acceptor) is an active-site residue. Catalysis depends on Lys-129, which acts as the Proton donor. The active-site Nucleophile is the Cys-162.

The protein belongs to the carbon-nitrogen hydrolase superfamily. Aliphatic amidase family.

It carries out the reaction formamide + H2O = formate + NH4(+). Its function is as follows. Is an aliphatic amidase with a restricted substrate specificity, as it only hydrolyzes formamide. This is Formamidase from Allorhizobium ampelinum (strain ATCC BAA-846 / DSM 112012 / S4) (Agrobacterium vitis (strain S4)).